The chain runs to 987 residues: MTSAAAVRSPGRRRAAVWTTLGVIVALVILFFIFAGLYADILWYQQFGFLSVLTTQWFAAIAMFFVGFLGMALPLWVVIQLAYRLRPVYAKLNSQLDRYQQVIEPLRRLAMYGIPIVFGIFAGVSAASRWQTAAMWINGTPYGKTDPLFHLDIGFYLFALPFYRSAVGFASAVVLISLLATLATCYLYGSIRLSGREVRIARAARVQISVIAAVYLLLQGVSVWLDRYATVTDANVNNMINGAAYTDVSATIPGQAVLAVAAVFVALLFAVTAFTGRWRFPVVGTALLIVAALVIGAIYPWAIQRFQVEPSQKTLETPYIQDSIEATRDAYGLSDIDVVPYNATTSAEAGALRQDAQTTAQIRIMDPAVISPSFQQLQQFRQYYSFPRNLNVDRYTLNGSQQDAVVSVRELNQSGLTSRSWYNDTVVYTHGYGMVAAYGNQRSSDGQPVFMEYGIPTQGTFGAYEPRVYFGQQSPTYSIVGAQKSAKSIELDYPGGDNDAQQTYTTFSGDGGPKLDNIFNRLVYALKFQDEQIVLSTAVNKDSQILYDRDPIKRVKKAAPYLTMDSQAYPAVIDGRIKWVVDGYTTSNQFPYSHVGSLSDAIADTETPKSAYAFDDINYIRNSVKATVDAYDGSVTLYAWDAKDPVLKTWQKIFPSTIKPISAMSAQLLQHVRYPSDLFKVQRSVLGQYHVTDAGSFYSRDDAWTTPNDPTSSPTDPTLQPPYYLTMQMPGQKAPTFSLYTTFIPQAASDSSRSILKGYLAVDADAGSTKGKVAPGYGKLRLLSLPSSDTIPGPGQVQNNFNSDPTVSQELNLLRQGKTDVTNGNLLTLPVGGGLLYVQPVYVKSTGETSYPILQKVLVAFGDKIAFEDTLDQALDSLFGGDSGATAGDNNVPATPGGSGGGSSGDAGSSAGGGSSGGGGSSAGGSSSGSGSSGTQSNAALQRALQQAKQALSDREAALKAGDWAAYGAADSRLQQALQAAIAAEGR.

A run of 7 helical transmembrane segments spans residues 17–37, 59–79, 108–128, 167–187, 206–226, 256–276, and 283–303; these read VWTTLGVIVALVILFFIFAGL, AAIAMFFVGFLGMALPLWVVI, RLAMYGIPIVFGIFAGVSAAS, VGFASAVVLISLLATLATCYL, VQISVIAAVYLLLQGVSVWLD, AVLAVAAVFVALLFAVTAFTG, and VGTALLIVAALVIGAIYPWAI. Disordered regions lie at residues 700–719 and 886–947; these read RDDAWTTPNDPTSSPTDPTL and TAGD…ALQQ. Residues 705–719 are compositionally biased toward low complexity; the sequence is TTPNDPTSSPTDPTL. Residues 897–932 show a composition bias toward gly residues; sequence GGSGGGSSGDAGSSAGGGSSGGGGSSAGGSSSGSGS. The segment covering 933 to 947 has biased composition (low complexity); sequence SGTQSNAALQRALQQ.

It belongs to the UPF0182 family.

The protein resides in the cell membrane. The sequence is that of UPF0182 protein Lxx09300 from Leifsonia xyli subsp. xyli (strain CTCB07).